Consider the following 284-residue polypeptide: MEMO1 family protein YN1551_0739 (284 aa).

This sequence belongs to the MEMO1 family.

This Saccharolobus islandicus (strain Y.N.15.51 / Yellowstone #2) (Sulfolobus islandicus) protein is MEMO1 family protein YN1551_0739.